A 446-amino-acid chain; its full sequence is Glycerol-3-phosphate acyltransferase 3 (446 aa).

3 consecutive transmembrane segments (helical) span residues 25–45 (LPSA…VLVK), 142–162 (LRLT…LLPL), and 164–184 (FTLA…VGQL). The short motif at 232–237 (HTSPID) is the HXXXXD motif element. Residues 352–372 (IVSYLLRIMTSWAIVCHVWYM) form a helical membrane-spanning segment. The segment at 418 to 446 (FKEEQQKNYSKMLVRNGSQGNLPAGTESD) is disordered.

This sequence belongs to the 1-acyl-sn-glycerol-3-phosphate acyltransferase family.

It is found in the endoplasmic reticulum membrane. The enzyme catalyses sn-glycerol 3-phosphate + an acyl-CoA = a 1-acyl-sn-glycero-3-phosphate + CoA. It carries out the reaction a 1-acyl-sn-glycero-3-phosphate + an acyl-CoA = a 1,2-diacyl-sn-glycero-3-phosphate + CoA. The catalysed reaction is dodecanoyl-CoA + sn-glycerol 3-phosphate = 1-dodecanoyl-sn-glycerol 3-phosphate + CoA. It catalyses the reaction sn-glycerol 3-phosphate + hexadecanoyl-CoA = 1-hexadecanoyl-sn-glycero-3-phosphate + CoA. The enzyme catalyses sn-glycerol 3-phosphate + (9Z)-octadecenoyl-CoA = 1-(9Z-octadecenoyl)-sn-glycero-3-phosphate + CoA. It carries out the reaction (9Z,12Z)-octadecadienoyl-CoA + sn-glycerol 3-phosphate = 1-(9Z,12Z)-octadecadienoyl-sn-glycero-3-phosphate + CoA. The catalysed reaction is 1-tetradecanoyl-sn-glycerol 3-phosphate + (9Z)-octadecenoyl-CoA = 1-tetradecanoyl-2-(9Z)-octadecenoyl-sn-glycero-3-phosphate + CoA. It catalyses the reaction 1-hexadecanoyl-sn-glycero-3-phosphate + (9Z)-octadecenoyl-CoA = 1-hexadecanoyl-2-(9Z-octadecenoyl)-sn-glycero-3-phosphate + CoA. The enzyme catalyses 1-(9Z-octadecenoyl)-sn-glycero-3-phosphate + (9Z)-octadecenoyl-CoA = 1,2-di-(9Z-octadecenoyl)-sn-glycero-3-phosphate + CoA. It carries out the reaction 1-(6Z,9Z,12Z-octadecatrienoyl)-sn-glycero-3-phosphate + (9Z)-octadecenoyl-CoA = (6Z,9Z,12Z)-octadecatrienoyl-2-(9Z)-octadecenoyl-sn-glycero-3-phosphate + CoA. The catalysed reaction is 1-(9Z,12Z,15Z)-octadecatrienoyl-sn-glycero-3-phosphate + (9Z)-octadecenoyl-CoA = 1-(9Z,12Z,15Z)-octadecatrienoyl-2-(9Z)-octadecenoyl-sn-glycero-3-phosphate + CoA. It catalyses the reaction 1-(9Z-octadecenoyl)-sn-glycero-3-phosphate + tetradecanoyl-CoA = 1-(9Z)-octadecenoyl-2-tetradecanoyl-sn-glycero-3-phosphate + CoA. The enzyme catalyses 1-(9Z-octadecenoyl)-sn-glycero-3-phosphate + hexadecanoyl-CoA = 1-(9Z)-octadecenoyl-2-hexadecanoyl-sn-glycero-3-phosphate + CoA. It carries out the reaction 1-(9Z-octadecenoyl)-sn-glycero-3-phosphate + octadecanoyl-CoA = 1-(9Z-octadecenoyl)-2-octadecanoyl-sn-glycero-3-phosphate + CoA. The catalysed reaction is 1-(9Z-octadecenoyl)-sn-glycero-3-phosphate + (9Z,12Z)-octadecadienoyl-CoA = 1-(9Z)-octadecenoyl-2-(9Z,12Z)-octadecadienoyl-sn-glycero-3-phosphate + CoA. It catalyses the reaction 1-(5Z,8Z,11Z,14Z-eicosatetraenoyl)-sn-glycero-3-phosphate + (9Z)-octadecenoyl-CoA = 1-(5Z,8Z,11Z,14Z)-eicosatetraenoyl-2-(9Z)-octadecenoyl-sn-glycero-3-phosphate + CoA. Its pathway is glycerolipid metabolism; triacylglycerol biosynthesis. It functions in the pathway phospholipid metabolism; CDP-diacylglycerol biosynthesis; CDP-diacylglycerol from sn-glycerol 3-phosphate: step 1/3. In terms of biological role, converts glycerol-3-phosphate to 1-acyl-sn-glycerol-3-phosphate (lysophosphatidic acid or LPA) by incorporating an acyl moiety at the sn-1 position of the glycerol backbone. Also converts LPA into 1,2-diacyl-sn-glycerol-3-phosphate (phosphatidic acid or PA) by incorporating an acyl moiety at the sn-2 position of the glycerol backbone. Protects cells against lipotoxicity. This Gallus gallus (Chicken) protein is Glycerol-3-phosphate acyltransferase 3.